Consider the following 515-residue polypeptide: ATP synthase subunit alpha (515 aa).

171 to 178 (GDRQTGKT) contributes to the ATP binding site.

Belongs to the ATPase alpha/beta chains family. F-type ATPases have 2 components, CF(1) - the catalytic core - and CF(0) - the membrane proton channel. CF(1) has five subunits: alpha(3), beta(3), gamma(1), delta(1), epsilon(1). CF(0) has three main subunits: a(1), b(2) and c(9-12). The alpha and beta chains form an alternating ring which encloses part of the gamma chain. CF(1) is attached to CF(0) by a central stalk formed by the gamma and epsilon chains, while a peripheral stalk is formed by the delta and b chains.

Its subcellular location is the cell inner membrane. It catalyses the reaction ATP + H2O + 4 H(+)(in) = ADP + phosphate + 5 H(+)(out). Produces ATP from ADP in the presence of a proton gradient across the membrane. The alpha chain is a regulatory subunit. This chain is ATP synthase subunit alpha, found in Xanthomonas axonopodis pv. citri (strain 306).